The sequence spans 253 residues: 5-oxoprolinase subunit A (253 aa).

Belongs to the LamB/PxpA family. Forms a complex composed of PxpA, PxpB and PxpC.

The catalysed reaction is 5-oxo-L-proline + ATP + 2 H2O = L-glutamate + ADP + phosphate + H(+). Its function is as follows. Catalyzes the cleavage of 5-oxoproline to form L-glutamate coupled to the hydrolysis of ATP to ADP and inorganic phosphate. The polypeptide is 5-oxoprolinase subunit A (Bacillus thuringiensis subsp. konkukian (strain 97-27)).